Here is a 447-residue protein sequence, read N- to C-terminus: Chitobiosyldiphosphodolichol beta-mannosyltransferase (447 aa).

At 1-8 (MSVFGFDN) the chain is on the lumenal side. The helical transmembrane segment at 9-29 (IPTWLWWLLAIYLATPFVLYV) threads the bilayer. Over 30-127 (VQPYLFYEGK…LCSMFWKLRA (98 aa)) the chain is Cytoplasmic. An intramembrane region (helical) is located at residues 128-148 (VDYILLQNPPTIPILPIAVVV). Residues 149–447 (KTFSRAKLII…ALSELKIIHK (299 aa)) are Lumenal-facing.

The protein belongs to the glycosyltransferase group 1 family.

The protein resides in the endoplasmic reticulum membrane. It catalyses the reaction an N,N'-diacetylchitobiosyl-diphospho-di-trans,poly-cis-dolichol + GDP-alpha-D-mannose = a beta-D-Man-(1-&gt;4)-beta-D-GlcNAc-(1-&gt;4)-alpha-D-GlcNAc-diphospho-di-trans,poly-cis-dolichol + GDP + H(+). It participates in protein modification; protein glycosylation. Its function is as follows. Participates in the formation of the lipid-linked precursor oligosaccharide for N-glycosylation. Involved in assembling the dolichol-pyrophosphate-GlcNAc(2)-Man(5) intermediate on the cytoplasmic surface of the ER. In Kluyveromyces lactis (strain ATCC 8585 / CBS 2359 / DSM 70799 / NBRC 1267 / NRRL Y-1140 / WM37) (Yeast), this protein is Chitobiosyldiphosphodolichol beta-mannosyltransferase (ALG1).